The following is a 456-amino-acid chain: tRNA modification GTPase MnmE (456 aa).

Residues Arg24, Glu81, and Lys120 each coordinate (6S)-5-formyl-5,6,7,8-tetrahydrofolate. The 164-residue stretch at 216-379 folds into the TrmE-type G domain; the sequence is GMTVVIAGRP…LRDHLKACMG (164 aa). Residue Asn226 coordinates K(+). Residues 226-231, 245-251, 270-273, and 335-338 each bind GTP; these read NAGKSS, TEIAGTT, DTAG, and NKAD. Residue Ser230 participates in Mg(2+) binding. Thr245, Ile247, and Thr250 together coordinate K(+). Thr251 serves as a coordination point for Mg(2+). Position 456 (Lys456) interacts with (6S)-5-formyl-5,6,7,8-tetrahydrofolate.

The protein belongs to the TRAFAC class TrmE-Era-EngA-EngB-Septin-like GTPase superfamily. TrmE GTPase family. As to quaternary structure, homodimer. Heterotetramer of two MnmE and two MnmG subunits. K(+) is required as a cofactor.

It localises to the cytoplasm. In terms of biological role, exhibits a very high intrinsic GTPase hydrolysis rate. Involved in the addition of a carboxymethylaminomethyl (cmnm) group at the wobble position (U34) of certain tRNAs, forming tRNA-cmnm(5)s(2)U34. In Pseudomonas fluorescens (strain Pf0-1), this protein is tRNA modification GTPase MnmE.